Reading from the N-terminus, the 456-residue chain is Phospholipase A1 member A (456 aa).

Positions 1 to 25 are cleaved as a signal peptide; the sequence is MRPGLWETCFWLWGPLLWLSIGSSG. The active-site Nucleophile is the Ser166. Asp190 functions as the Charge relay system in the catalytic mechanism. Cys245 and Cys258 are joined by a disulfide. The active-site Charge relay system is the His260. 2 disulfide bridges follow: Cys282–Cys293 and Cys296–Cys304. N-linked (GlcNAc...) asparagine glycosylation is present at Asn365.

This sequence belongs to the AB hydrolase superfamily. Lipase family.

The protein localises to the secreted. The catalysed reaction is a 1,2-diacyl-sn-glycero-3-phospho-L-serine + H2O = a 2-acyl-sn-glycero-3-phospho-L-serine + a fatty acid + H(+). The enzyme catalyses 1,2-di-(9Z)-octadecenoyl-sn-glycero-3-phospho-L-serine + H2O = 2-(9Z-octadecenoyl)-sn-glycero-3-phospho-L-serine + (9Z)-octadecenoate + H(+). It carries out the reaction 1-hexadecanoyl-2-(5Z,8Z,11Z,14Z-eicosatetraenoyl)-sn-glycero-3-phospho-L-serine + H2O = 2-(5Z,8Z,11Z,14Z)-eicosatetraenoyl-sn-glycero-3-phospho-L-serine + hexadecanoate + H(+). It catalyses the reaction a 1-acyl-sn-glycero-3-phospho-L-serine + H2O = sn-glycero-3-phospho-L-serine + a fatty acid + H(+). The catalysed reaction is 1-(9Z-octadecenoyl)-sn-glycero-3-phospho-L-serine + H2O = sn-glycero-3-phospho-L-serine + (9Z)-octadecenoate + H(+). Functionally, hydrolyzes the ester bond of the acyl group attached at the sn-1 position of phosphatidylserines (phospholipase A1 activity) and 1-acyl-2-lysophosphatidylserines (lysophospholipase activity) in the pathway of phosphatidylserines acyl chain remodeling. Cleaves phosphatidylserines exposed on the outer leaflet of the plasma membrane of apoptotic cells producing 2-acyl-1-lysophosphatidylserines, which in turn enhance mast cell activation and histamine production. Has no activity toward other glycerophospholipids including phosphatidylcholines, phosphatidylethanolamines, phosphatidic acids or phosphatidylinositols, or glycerolipids such as triolein. This is Phospholipase A1 member A from Mus musculus (Mouse).